Consider the following 1384-residue polypeptide: MKAPAVLAPGILVLLFTFVQKSNGECKEALVKSRMNVNMQYQLPNFTAETSIRNVVLHKHHIYLGAINYIYVLNDKDLQKVAEYKTGPVLEHPDCFPCQDCSHKANLSGGVWKDNINMALLVDTYYDDQLISCGSVHRGTCQRHVLPPNNTADIESEVHCMYSPQEDEETNQCPDCVVSALGTKVLLSEKERFINFFVGNTINSSYFPDHSLHSISVRRLKETQDGFKFLTDQSYIDVLPELQDSYPIKYVHAFESNHFIYFLTVQRETLDAQTFHTRIIRFCSADSGLHSYMEMPLECILTEKRRKRSTKQEVFNILQAAYVSKPGAQLARQIGANLNDDILYGVFAQSKPDSSEPMNRSAVCAFPVKYVNEFFNKIVNKNNVRCLQHFYGPNHEHCFNRTLLRNSSGCEVRNDEYRTEFTTALPRIDLFMGQFNQVLLTSISTFIKGDLTIANLGTSEGRFMQVVVSRSGSLTPHVNFPLDSHPVSPEVVVEHPLNQNGYTLVVTGKKITKIPLNGLGCEHFQSCSQCLSAPSFVQCGWCHDKCVRLEECPSGRWTQETCLPTIYKVFPTSAPLEGGTTLTVCGWDFGFKRNNKFDLKKTRVLLGNESCTLTLSESTTNMLKCTVGPATNEHFNMSIVISNSRGSVQYSMFSYVDPIITSISPNYGPKTGGTLLTLTGKHLNSGNSRHISIGGKTCTLKSVSYSILECYTPAQSAPTEFSVKLKIDLANREVNSFIYREDPIVYEIHPTKSFISGGSTITGVGKNLNSVSIIRMVINVHEAGKNFTVACQHRSNSEIICCTTPSLQQLNLQLPLKTKAFFMLDGIHSKYFDLIYVHNPVFKPFEKPVMISIGNENVLEIKGNDIDPEAVKGEVLKVGNKSCENIQSHSEAVLCTVPNDLLKLNSELNIEWKQAISSTVLGKVIVQPDQNFTGLIVGVVSVSIILLLLLGLFLWLKKRKQIKDLGSELVRYDARVHTPHLDRLVSARSVSPTTEMVSNESVDYRATFPEDQFPNSSQNGSCRQVQYPLTDLSPILTSGDSDISSPLLQNTVHIDLSALNPELVQAVQHVVIGPSSLIVHFNEVIGRGHFGCVYHGTLLDNDDKKIHCAVKSLNRITDIGEVSQFLTEGIIMKDFSHPNVLSLLGICLRSEGSPLVVLPYMKHGDLRNFIRNETHNPTVKDLIGFGLQVAKGMEYLASKKFVHRDLAARNCMLDEKFTVKVADFGLARDVYDKEYYSVHNKTGAKLPVKWMALESLQTQKFTTKSDVWSFGVLLWELMTRGAPPYPDVNTFDITVYLLQGRRLLQPEYCPDPLYEVMLKCWHPKAELRPSFSELVSRIAAIFSAFIGEHYVHVNATYVNVRCVAPYPSLLSSQENVSGEDDDDT.

A signal peptide spans 1-24 (MKAPAVLAPGILVLLFTFVQKSNG). Topologically, residues 25 to 933 (ECKEALVKSR…VIVQPDQNFT (909 aa)) are extracellular. Residues 27–516 (KEALVKSRMN…TGKKITKIPL (490 aa)) enclose the Sema domain. Residue Asn45 is glycosylated (N-linked (GlcNAc...) asparagine). Disulfide bonds link Cys95/Cys101, Cys98/Cys160, Cys133/Cys141, and Cys173/Cys176. Residue Asn106 is glycosylated (N-linked (GlcNAc...) asparagine). Asn149 carries an N-linked (GlcNAc...) asparagine glycan. N-linked (GlcNAc...) asparagine glycans are attached at residues Asn203 and Asn359. 2 cysteine pairs are disulfide-bonded: Cys299/Cys364 and Cys386/Cys398. Residues Asn400 and Asn406 are each glycosylated (N-linked (GlcNAc...) asparagine). Disulfide bonds link Cys521/Cys539, Cys527/Cys562, Cys530/Cys546, and Cys542/Cys552. IPT/TIG domains lie at 564–656 (PTIY…FSYV), 658–740 (PIIT…FIYR), and 743–837 (PIVY…LIYV). The O-linked (Man) threonine glycan is linked to Thr583. N-linked (GlcNAc...) asparagine glycosylation is found at Asn608 and Asn636. Residues Thr677 and Thr762 are each glycosylated (O-linked (Man) threonine). 3 N-linked (GlcNAc...) asparagine glycosylation sites follow: Asn786, Asn880, and Asn931. Residues 934 to 956 (GLIVGVVSVSIILLLLLGLFLWL) traverse the membrane as a helical segment. Residues 957–1384 (KKRKQIKDLG…NVSGEDDDDT (428 aa)) lie on the Cytoplasmic side of the membrane. Ser967 carries the phosphoserine modification. Thr978 carries the phosphothreonine modification. Phosphoserine is present on residues Ser991, Ser998, and Ser1001. Tyr1004 carries the phosphotyrosine modification. In terms of domain architecture, Protein kinase spans 1079 to 1346 (VHFNEVIGRG…RIAAIFSAFI (268 aa)). ATP is bound by residues 1085–1093 (IGRGHFGCV) and Lys1111. Asp1205 acts as the Proton acceptor in catalysis. The segment at 1213–1382 (LDEKFTVKVA…QENVSGEDDD (170 aa)) is interaction with RANBP9. The residue at position 1231 (Tyr1231) is a Phosphotyrosine. Phosphotyrosine; by autocatalysis occurs at positions 1235 and 1236. Residue Thr1290 is modified to Phosphothreonine. Residues 1321–1360 (WHPKAELRPSFSELVSRIAAIFSAFIGEHYVHVNATYVNV) form an interaction with MUC20 region. Phosphotyrosine; by autocatalysis is present on residues Tyr1350 and Tyr1357. The residue at position 1366 (Tyr1366) is a Phosphotyrosine.

It belongs to the protein kinase superfamily. Tyr protein kinase family. As to quaternary structure, heterodimer made of an alpha chain (50 kDa) and a beta chain (145 kDa) which are disulfide linked. Binds PLXNB1. Interacts when phosphorylated with downstream effectors including STAT3, PIK3R1, SRC, PCLG1, GRB2 and GAB1. Interacts with SPSB1, SPSB2 and SPSB4. Interacts with INPP5D/SHIP1. When phosphorylated at Tyr-1357, interacts with INPPL1/SHIP2. Interacts with RANBP9 and RANBP10, as well as SPSB1, SPSB2, SPSB3 and SPSB4. SPSB1 binding occurs in the presence and in the absence of HGF, however HGF treatment has a positive effect on this interaction. Interacts with MUC20; prevents interaction with GRB2 and suppresses hepatocyte growth factor-induced cell proliferation. Interacts with GRB10. Interacts with PTPN1 and PTPN2. Interacts with HSP90AA1 and HSP90AB1; the interaction suppresses MET kinase activity. Interacts with tensin TNS3. Interacts (when phosphorylated) with tensin TNS4 (via SH2 domain); the interaction increases MET protein stability by inhibiting MET endocytosis and subsequent lysosomal degradation. Post-translationally, autophosphorylated in response to ligand binding on Tyr-1235 and Tyr-1236 in the kinase domain leading to further phosphorylation of Tyr-1350 and Tyr-1357 in the C-terminal multifunctional docking site. Dephosphorylated by PTPRJ at Tyr-1350 and Tyr-1366. Dephosphorylated by PTPN1 and PTPN2. In terms of processing, ubiquitinated. Ubiquitination by CBL regulates the receptor stability and activity through proteasomal degradation. O-mannosylation of IPT/TIG domains by TMEM260 is required for protein maturation. O-mannosylated residues are composed of single mannose glycans that are not elongated or modified.

It localises to the membrane. The catalysed reaction is L-tyrosyl-[protein] + ATP = O-phospho-L-tyrosyl-[protein] + ADP + H(+). Its activity is regulated as follows. In its inactive state, the C-terminal tail interacts with the catalytic domain and inhibits the kinase activity. Upon ligand binding, the C-terminal tail is displaced and becomes phosphorylated, thus increasing the kinase activity. In terms of biological role, receptor tyrosine kinase that transduces signals from the extracellular matrix into the cytoplasm by binding to hepatocyte growth factor/HGF ligand. Regulates many physiological processes including proliferation, scattering, morphogenesis and survival. Ligand binding at the cell surface induces autophosphorylation of MET on its intracellular domain that provides docking sites for downstream signaling molecules. Following activation by ligand, interacts with the PI3-kinase subunit PIK3R1, PLCG1, SRC, GRB2, STAT3 or the adapter GAB1. Recruitment of these downstream effectors by MET leads to the activation of several signaling cascades including the RAS-ERK, PI3 kinase-AKT, or PLCgamma-PKC. The RAS-ERK activation is associated with the morphogenetic effects while PI3K/AKT coordinates prosurvival effects. During embryonic development, MET signaling plays a role in gastrulation, development and migration of muscles and neuronal precursors, angiogenesis and kidney formation. In adults, participates in wound healing as well as organ regeneration and tissue remodeling. Also promotes differentiation and proliferation of hematopoietic cells. The polypeptide is Hepatocyte growth factor receptor (MET) (Ovis aries (Sheep)).